A 310-amino-acid chain; its full sequence is tRNA dimethylallyltransferase (310 aa).

Position 13-20 (13-20 (GPTASGKT)) interacts with ATP. 15 to 20 (TASGKT) serves as a coordination point for substrate. Interaction with substrate tRNA stretches follow at residues 38-41 (DSAL), 162-166 (QRLSR), 243-248 (RCVGYR), and 276-283 (KRQITWLR).

It belongs to the IPP transferase family. As to quaternary structure, monomer. It depends on Mg(2+) as a cofactor.

The enzyme catalyses adenosine(37) in tRNA + dimethylallyl diphosphate = N(6)-dimethylallyladenosine(37) in tRNA + diphosphate. In terms of biological role, catalyzes the transfer of a dimethylallyl group onto the adenine at position 37 in tRNAs that read codons beginning with uridine, leading to the formation of N6-(dimethylallyl)adenosine (i(6)A). The sequence is that of tRNA dimethylallyltransferase from Vibrio campbellii (strain ATCC BAA-1116).